Here is a 229-residue protein sequence, read N- to C-terminus: Transmembrane protein 217 (229 aa).

The chain crosses the membrane as a helical span at residues 13-33 (MGTVLSGVFTIMAVDMYLIFE). Asn39 carries an N-linked (GlcNAc...) asparagine glycan. The next 3 helical transmembrane spans lie at 67-87 (IVLFLSFITILISCFLLYSVY), 94-114 (LVIYIVWIFFYETANVVIQIL), and 129-149 (WFGLVSRTVMHCFWMFFVINY). A glycan (N-linked (GlcNAc...) asparagine) is linked at Asn156.

It localises to the membrane. This chain is Transmembrane protein 217 (TMEM217), found in Homo sapiens (Human).